The sequence spans 459 residues: Putrescine aminotransferase (459 aa).

Pyridoxal 5'-phosphate contacts are provided by residues 150–151 (GT) and glutamine 274. Lysine 300 carries the post-translational modification N6-(pyridoxal phosphate)lysine. Threonine 332 is a binding site for pyridoxal 5'-phosphate.

The protein belongs to the class-III pyridoxal-phosphate-dependent aminotransferase family. Putrescine aminotransferase subfamily. Requires pyridoxal 5'-phosphate as cofactor.

The catalysed reaction is an alkane-alpha,omega-diamine + 2-oxoglutarate = an omega-aminoaldehyde + L-glutamate. The enzyme catalyses putrescine + 2-oxoglutarate = 1-pyrroline + L-glutamate + H2O. It carries out the reaction cadaverine + 2-oxoglutarate = 5-aminopentanal + L-glutamate. It participates in amine and polyamine degradation; putrescine degradation; 4-aminobutanal from putrescine (transaminase route): step 1/1. Catalyzes the aminotransferase reaction from putrescine to 2-oxoglutarate, leading to glutamate and 4-aminobutanal, which spontaneously cyclizes to form 1-pyrroline. This is the first step in one of two pathways for putrescine degradation, where putrescine is converted into 4-aminobutanoate (gamma-aminobutyrate or GABA) via 4-aminobutanal. Also functions as a cadaverine transaminase in a a L-lysine degradation pathway to succinate that proceeds via cadaverine, glutarate and L-2-hydroxyglutarate. In Salmonella agona (strain SL483), this protein is Putrescine aminotransferase.